A 428-amino-acid chain; its full sequence is tRNA dimethylallyltransferase (428 aa).

21–28 provides a ligand contact to ATP; the sequence is GTTGVGKS. A dimethylallyl diphosphate-binding site is contributed by 23–28; the sequence is TGVGKS. 2 interaction with substrate tRNA regions span residues 46 to 49 and 170 to 174; these read DSMQ and RRVQR. The interval 199–207 is core aggregation region; the sequence is FDTLFLWLY. The segment at 210 to 232 is interaction with isopentenylpyrophosphate transferase; that stretch reads PEPLFQRLDDRVDDMLERGALQE. Interaction with substrate tRNA stretches follow at residues 256-258 and 284-302; these read QVI and RMKTRTRQYAKRQVKWIKK. Residues 373 to 409 form a Matrin-type zinc finger; the sequence is YTCNVCRNADGKNVVAIGEKYWKIHLGSRRHKSNLKR. Zn(2+) is bound by residues cysteine 375, cysteine 378, histidine 397, and histidine 403.

This sequence belongs to the IPP transferase family.

It is found in the cytoplasm. The protein resides in the mitochondrion. The protein localises to the nucleus. The catalysed reaction is adenosine(37) in tRNA + dimethylallyl diphosphate = N(6)-dimethylallyladenosine(37) in tRNA + diphosphate. Catalyzes the transfer of a dimethylallyl group onto the adenine at position 37 in the anticodon loop on a specific subset of tRNAs both in the cytosol and the mitochondrion, leading to the formation of N6-(dimethylallyl)adenosine (i(6)A). This modification optimizes the codon:anticodon fit in the ribosome and promotes translational fidelity. Competes with the farnesyl pyrophosphate synthase ERG20 for the common substrate dimethylallyl diphosphate (DMAPP). This Saccharomyces cerevisiae (strain ATCC 204508 / S288c) (Baker's yeast) protein is tRNA dimethylallyltransferase (MOD5).